The chain runs to 100 residues: Aspartyl/glutamyl-tRNA(Asn/Gln) amidotransferase subunit C (100 aa).

It belongs to the GatC family. Heterotrimer of A, B and C subunits.

The catalysed reaction is L-glutamyl-tRNA(Gln) + L-glutamine + ATP + H2O = L-glutaminyl-tRNA(Gln) + L-glutamate + ADP + phosphate + H(+). It carries out the reaction L-aspartyl-tRNA(Asn) + L-glutamine + ATP + H2O = L-asparaginyl-tRNA(Asn) + L-glutamate + ADP + phosphate + 2 H(+). Allows the formation of correctly charged Asn-tRNA(Asn) or Gln-tRNA(Gln) through the transamidation of misacylated Asp-tRNA(Asn) or Glu-tRNA(Gln) in organisms which lack either or both of asparaginyl-tRNA or glutaminyl-tRNA synthetases. The reaction takes place in the presence of glutamine and ATP through an activated phospho-Asp-tRNA(Asn) or phospho-Glu-tRNA(Gln). The chain is Aspartyl/glutamyl-tRNA(Asn/Gln) amidotransferase subunit C from Staphylococcus saprophyticus subsp. saprophyticus (strain ATCC 15305 / DSM 20229 / NCIMB 8711 / NCTC 7292 / S-41).